The sequence spans 386 residues: uncharacterized protein (386 aa).

A run of 11 helical transmembrane segments spans residues 3-23 (WFSL…LVAI), 42-62 (LVGH…IFLW), 72-92 (FASF…SLFG), 102-122 (VPTI…LGVF), 145-165 (ILST…IAYF), 183-203 (FGGH…WLLL), 212-232 (WFLN…QIFL), 244-264 (TWGY…ITLV), 276-296 (ILVL…MIVG), 308-328 (VIAS…QELG), and 333-353 (LGKF…FLSS).

It to R.prowazekii RP382.

Its subcellular location is the cell membrane. This is an uncharacterized protein from Aquifex aeolicus (strain VF5).